The chain runs to 581 residues: ATP-dependent lipid A-core flippase (581 aa).

The next 5 helical transmembrane spans lie at Leu15–Leu35, Leu68–Ile88, Ile152–Val172, Pro252–Pro272, and Ile274–Met294. An ABC transmembrane type-1 domain is found at Ile27 to Arg309. One can recognise an ABC transporter domain in the interval Ile341–Met577. Gly375 to Ser382 serves as a coordination point for ATP.

This sequence belongs to the ABC transporter superfamily. Lipid exporter (TC 3.A.1.106) family. In terms of assembly, homodimer.

Its subcellular location is the cell inner membrane. It catalyses the reaction ATP + H2O + lipid A-core oligosaccharideSide 1 = ADP + phosphate + lipid A-core oligosaccharideSide 2.. Involved in lipopolysaccharide (LPS) biosynthesis. Translocates lipid A-core from the inner to the outer leaflet of the inner membrane. Transmembrane domains (TMD) form a pore in the inner membrane and the ATP-binding domain (NBD) is responsible for energy generation. This is ATP-dependent lipid A-core flippase from Photorhabdus laumondii subsp. laumondii (strain DSM 15139 / CIP 105565 / TT01) (Photorhabdus luminescens subsp. laumondii).